Reading from the N-terminus, the 858-residue chain is Leucine--tRNA ligase (858 aa).

Residues Pro-42–His-52 carry the 'HIGH' region motif. Positions Lys-618–Ser-622 match the 'KMSKS' region motif. Lys-621 contributes to the ATP binding site.

The protein belongs to the class-I aminoacyl-tRNA synthetase family.

Its subcellular location is the cytoplasm. The enzyme catalyses tRNA(Leu) + L-leucine + ATP = L-leucyl-tRNA(Leu) + AMP + diphosphate. The sequence is that of Leucine--tRNA ligase from Photobacterium profundum (strain SS9).